A 456-amino-acid chain; its full sequence is Shootin-1 (456 aa).

Met-1 is subject to N-acetylmethionine. 2 positions are modified to phosphoserine: Ser-3 and Ser-4. A coiled-coil region spans residues 7-353 (EKQLQLITSL…RVNQSENSVP (347 aa)). A phosphoserine; by PAK1 mark is found at Ser-101 and Ser-249. Disordered stretches follow at residues 343–405 (KRVN…VTDL) and 418–445 (KKGV…CESA). Pro residues predominate over residues 352–369 (VPPPPPPPPPLPPPPPNP). Position 375 is a phosphoserine (Ser-375).

It belongs to the shootin family. As to quaternary structure, interacts with L1CAM; this interaction occurs in axonal growth cones. Interacts with actin filament retrograde flow; this interaction is enhanced in a netrin-1- and PAK1-dependent manner and promotes F-actin-substrate coupling and concomitant formation of traction forces at axonal growth cones. Interacts with RUFY3. Interacts with PFN2. Interacts (via N-terminus) with KIF20B; this interaction is direct and promotes the association of SHTN1 to microtubules in primary neurons. Associates with microtubule. Phosphorylated on Ser-101 and Ser-249 by PAK1 through a CDC42- and RAC1-dependent signaling pathway, which enhances its association with F-actin retrograde flow in filopodia and lamellipodia of axonal growth cones. Phosphorylation on Ser-101 and Ser-249 is increased by netrin-1.

The protein resides in the perikaryon. It localises to the cell projection. The protein localises to the axon. Its subcellular location is the growth cone. It is found in the cytoplasm. The protein resides in the cytoskeleton. It localises to the filopodium. The protein localises to the lamellipodium. In terms of biological role, involved in the generation of internal asymmetric signals required for neuronal polarization and neurite outgrowth. Mediates netrin-1-induced F-actin-substrate coupling or 'clutch engagement' within the axon growth cone through activation of CDC42, RAC1 and PAK1-dependent signaling pathway, thereby converting the F-actin retrograde flow into traction forces, concomitantly with filopodium extension and axon outgrowth. Plays a role in cytoskeletal organization by regulating the subcellular localization of phosphoinositide 3-kinase (PI3K) activity at the axonal growth cone. Also plays a role in regenerative neurite outgrowth. In the developing cortex, cooperates with KIF20B to promote both the transition from the multipolar to the bipolar stage and the radial migration of cortical neurons from the ventricular zone toward the superficial layer of the neocortex. Involved in the accumulation of phosphatidylinositol 3,4,5-trisphosphate (PIP3) in the growth cone of primary hippocampal neurons. In Pongo abelii (Sumatran orangutan), this protein is Shootin-1.